A 415-amino-acid chain; its full sequence is Serine hydroxymethyltransferase (415 aa).

Residues Leu118 and 122 to 124 each bind (6S)-5,6,7,8-tetrahydrofolate; that span reads GHL. Lys227 carries the N6-(pyridoxal phosphate)lysine modification.

The protein belongs to the SHMT family. In terms of assembly, homodimer. The cofactor is pyridoxal 5'-phosphate.

It localises to the cytoplasm. The enzyme catalyses (6R)-5,10-methylene-5,6,7,8-tetrahydrofolate + glycine + H2O = (6S)-5,6,7,8-tetrahydrofolate + L-serine. It participates in one-carbon metabolism; tetrahydrofolate interconversion. Its pathway is amino-acid biosynthesis; glycine biosynthesis; glycine from L-serine: step 1/1. Functionally, catalyzes the reversible interconversion of serine and glycine with tetrahydrofolate (THF) serving as the one-carbon carrier. This reaction serves as the major source of one-carbon groups required for the biosynthesis of purines, thymidylate, methionine, and other important biomolecules. Also exhibits THF-independent aldolase activity toward beta-hydroxyamino acids, producing glycine and aldehydes, via a retro-aldol mechanism. This Elusimicrobium minutum (strain Pei191) protein is Serine hydroxymethyltransferase.